The following is a 95-amino-acid chain: CRISPR-associated endoribonuclease Cas2 1 (95 aa).

Asp8 contacts Mg(2+).

The protein belongs to the CRISPR-associated endoribonuclease Cas2 protein family. In terms of assembly, homodimer, forms a heterotetramer with a Cas1 homodimer. Mg(2+) serves as cofactor.

In terms of biological role, CRISPR (clustered regularly interspaced short palindromic repeat), is an adaptive immune system that provides protection against mobile genetic elements (viruses, transposable elements and conjugative plasmids). CRISPR clusters contain sequences complementary to antecedent mobile elements and target invading nucleic acids. CRISPR clusters are transcribed and processed into CRISPR RNA (crRNA). Functions as a ssRNA-specific endoribonuclease. Involved in the integration of spacer DNA into the CRISPR cassette. The protein is CRISPR-associated endoribonuclease Cas2 1 of Pyrobaculum aerophilum (strain ATCC 51768 / DSM 7523 / JCM 9630 / CIP 104966 / NBRC 100827 / IM2).